The following is a 185-amino-acid chain: MATPGNVTFKNTHDSWGMNWGLCDSSEQMLTMQGMPWIMRKLASWISVTVVIKTWTDPETGETRFLLQHNPPMGLPGMSEERALDYVPDELTVPNLGKLRVRTRWGTAKELDQLDKYLARGLEKGPHSMIHMMTEHLDIDAVTHQIFGYEEIDGTRYHVRRIVVRKGHEVARLRLVYNYLGPRAG.

The protein belongs to the pericyclase pydY family.

Its pathway is mycotoxin biosynthesis. In terms of biological role, pericyclase; part of the gene cluster that mediates the biosynthesis of pyrrocidines, fungal natural products containing a macrocyclic para-cyclophane connected to a decahydrofluorene ring system that show potent antibiotic activities toward Gram-negative bacteria. Within the pathway, pydY is involved in the late Diels-Alder cycloaddition step that leads to the formation of the decahydrofluorene core. The pathway begins with the PKS-NRPS pydA which, with the help of the trans-enoyl reductase pydC, synthesizes the polyketide-tyrosyl acyl thioester product which can be reductively off-loaded by the terminal reductase (R) domain in pydA. The alpha/beta hydrolase pydG is then required to catalyze the subsequent Knoevenagel condensation that affords the 3-pyrrolin-2-one ring, whereas the four proteins pydB, pydE, pydX and pydZ then function synergistically to form the cyclophane. PydB and the membrane-bound pydX and pydZ are lipid-binding proteins that can sequester and mold the pdyG product into the inverse S-shape. Binding of the medium chain reductase pydE to the complex would trigger the cascade oxidative cyclization. PydY is involved in the Diels-Alder cycloaddition that forms the decahydrofluorene core. Additional non-enzymatic hydroxylation yields pyrrocidine A2 which can be further reduced into pyrrocidine B by an endogenous reductase. This Acremonium sp protein is Pericyclase pydY.